A 526-amino-acid polypeptide reads, in one-letter code: Tyrosine-protein kinase transforming protein Src (526 aa).

The interval Met1 to Gly52 is disordered. A lipid anchor (N-myristoyl glycine; by host) is attached at Gly2. Over residues Lys7–His25 the composition is skewed to basic and acidic residues. Positions Gly81 to Ser142 constitute an SH3 domain. The SH2 domain maps to Trp148 to Cys245. The Protein kinase domain maps to Leu267–Leu517. ATP-binding positions include Leu273 to Val281 and Lys295. Residue Asp386 is the Proton acceptor of the active site. Tyr416 bears the Phosphotyrosine; by autocatalysis mark.

Belongs to the protein kinase superfamily. Tyr protein kinase family. SRC subfamily. The cofactor is Mn(2+). The phosphorylated form is termed pp60v-src.

The catalysed reaction is L-tyrosyl-[protein] + ATP = O-phospho-L-tyrosyl-[protein] + ADP + H(+). Its function is as follows. This phosphoprotein, required for both the initiation and the maintenance of neoplastic transformation, is a protein kinase that catalyzes the phosphorylation of tyrosine residues in vitro. In Gallus gallus (Chicken), this protein is Tyrosine-protein kinase transforming protein Src (V-SRC).